The primary structure comprises 594 residues: Proteasome-associated ATPase (594 aa).

The segment covering 1–12 (MTETSANKPENT) has biased composition (polar residues). Residues 1–20 (MTETSANKPENTQAHEGRDY) are disordered. The stretch at 18–71 (RDYSVLERQFNVLRDKLRNVDRQLAAATQNNTKMTTTLQSAKAEILRLKSALEK) forms a coiled coil. 282–287 (GCGKTL) is an ATP binding site. A docks into pockets in the proteasome alpha-ring region spans residues 593–594 (YL).

Belongs to the AAA ATPase family. As to quaternary structure, homohexamer. Assembles into a hexameric ring structure that caps the 20S proteasome core. Strongly interacts with the prokaryotic ubiquitin-like protein Pup through a hydrophobic interface; the interacting region of ARC lies in its N-terminal coiled-coil domain. There is one Pup binding site per ARC hexamer ring. Upon ATP-binding, the C-terminus of ARC interacts with the alpha-rings of the proteasome core, possibly by binding to the intersubunit pockets.

It participates in protein degradation; proteasomal Pup-dependent pathway. ATPase which is responsible for recognizing, binding, unfolding and translocation of pupylated proteins into the bacterial 20S proteasome core particle. May be essential for opening the gate of the 20S proteasome via an interaction with its C-terminus, thereby allowing substrate entry and access to the site of proteolysis. Thus, the C-termini of the proteasomal ATPase may function like a 'key in a lock' to induce gate opening and therefore regulate proteolysis. This chain is Proteasome-associated ATPase, found in Renibacterium salmoninarum (strain ATCC 33209 / DSM 20767 / JCM 11484 / NBRC 15589 / NCIMB 2235).